The following is a 565-amino-acid chain: NAD-dependent malic enzyme (565 aa).

Tyr-104 acts as the Proton donor in catalysis. Arg-157 contacts NAD(+). Lys-175 acts as the Proton acceptor in catalysis. 3 residues coordinate a divalent metal cation: Glu-246, Asp-247, and Asp-270. Positions 270 and 418 each coordinate NAD(+).

This sequence belongs to the malic enzymes family. As to quaternary structure, homotetramer. Requires Mg(2+) as cofactor. It depends on Mn(2+) as a cofactor.

It carries out the reaction (S)-malate + NAD(+) = pyruvate + CO2 + NADH. The catalysed reaction is oxaloacetate + H(+) = pyruvate + CO2. The chain is NAD-dependent malic enzyme from Salmonella choleraesuis (strain SC-B67).